Reading from the N-terminus, the 342-residue chain is Endo-1,4-beta-xylanase A (342 aa).

The GH10 domain occupies 11 to 342; sequence EMLNLSLAKT…KEALYRILRF (332 aa). Glu-144 acts as the Proton donor in catalysis. The active-site Nucleophile is the Glu-252.

The protein belongs to the glycosyl hydrolase 10 (cellulase F) family. Cytoplasmic xylanase subfamily.

The protein localises to the cytoplasm. It carries out the reaction Endohydrolysis of (1-&gt;4)-beta-D-xylosidic linkages in xylans.. The protein operates within glycan degradation; xylan degradation. This chain is Endo-1,4-beta-xylanase A (xynA), found in Caldicellulosiruptor saccharolyticus (Caldocellum saccharolyticum).